The sequence spans 474 residues: UDP-N-acetylmuramate--L-alanine ligase (474 aa).

Residue 115–121 participates in ATP binding; sequence GTHGKTT.

It belongs to the MurCDEF family.

The protein localises to the cytoplasm. The catalysed reaction is UDP-N-acetyl-alpha-D-muramate + L-alanine + ATP = UDP-N-acetyl-alpha-D-muramoyl-L-alanine + ADP + phosphate + H(+). It functions in the pathway cell wall biogenesis; peptidoglycan biosynthesis. Cell wall formation. In Novosphingobium aromaticivorans (strain ATCC 700278 / DSM 12444 / CCUG 56034 / CIP 105152 / NBRC 16084 / F199), this protein is UDP-N-acetylmuramate--L-alanine ligase.